An 89-amino-acid polypeptide reads, in one-letter code: FXYD domain-containing ion transport regulator 4 (89 aa).

A signal peptide spans 1–20 (MERVTLALLLLAGLTALEAN). At 21–38 (DPFANKDDPFYYDWKNLQ) the chain is on the extracellular side. A helical transmembrane segment spans residues 39-59 (LSGLICGGLLAIAGIAAVLSG). Topologically, residues 60–89 (KCKCKSSQKQHSPVPEKAIPLITPGSATTC) are cytoplasmic.

It belongs to the FXYD family. As to quaternary structure, regulatory subunit of the sodium/potassium-transporting ATPase which is composed of a catalytic alpha subunit, a non-catalytic beta subunit and a regulatory subunit. The regulatory subunit, a member of the FXYD protein family, modulates the enzymatic activity in a tissue- and isoform-specific way by changing affinities of the Na+/K+-ATPase toward Na(+), K(+) or ATP.

Its subcellular location is the cell membrane. The protein resides in the basolateral cell membrane. Associates with and regulates the activity of the sodium/potassium-transporting ATPase (NKA) which catalyzes the hydrolysis of ATP coupled with the exchange of Na(+) and K(+) ions across the plasma membrane. Increases the apparent affinity of the transporter for Na(+) and increases NKA activity. This is FXYD domain-containing ion transport regulator 4 (FXYD4) from Homo sapiens (Human).